A 415-amino-acid chain; its full sequence is Corticotropin-releasing factor receptor 1 (415 aa).

An N-terminal signal peptide occupies residues 1-23; that stretch reads MGRRPQLRLVKALLLLGLNPVST. At 24–111 the chain is on the extracellular side; the sequence is SLQDQRCENL…CQEILNEEKK (88 aa). 3 disulfides stabilise this stretch: cysteine 30/cysteine 54, cysteine 44/cysteine 87, and cysteine 68/cysteine 102. N-linked (GlcNAc...) asparagine glycosylation is found at asparagine 38, asparagine 45, asparagine 78, asparagine 90, and asparagine 98. An important for peptide agonist binding region spans residues 99–108; that stretch reads YSECQEILNE. Residues 112 to 142 form a helical membrane-spanning segment; sequence SKVHYHVAVIINYLGHCISLVALLVAFVLFL. The Cytoplasmic portion of the chain corresponds to 143-149; the sequence is RLRSIRC. Residues 150-174 form a helical membrane-spanning segment; the sequence is LRNIIHWNLISAFILRNATWFVVQL. The Extracellular segment spans residues 175–189; the sequence is TVSPEVHQSNVAWCR. Cysteine 188 and cysteine 258 are disulfide-bonded. The helical transmembrane segment at 190–218 threads the bilayer; the sequence is LVTAAYNYFHVTNFFWMFGEGCYLHTAIV. Topologically, residues 219-225 are cytoplasmic; the sequence is LTYSTDR. The helical transmembrane segment at 226 to 253 threads the bilayer; that stretch reads LRKWMFVCIGWGVPFPIIVAWAIGKLHY. Over 254-269 the chain is Extracellular; the sequence is DNEKCWFGKRPGVYTD. Residues 270 to 295 form a helical membrane-spanning segment; sequence YIYQGPMILVLLINFIFLFNIVRILM. Positions 280 to 290 are important for antagonist binding; it reads LLINFIFLFNI. Residues 296–306 lie on the Cytoplasmic side of the membrane; that stretch reads TKLRASTTSET. Serine 301 is modified (phosphoserine; by PKA). A helical membrane pass occupies residues 307–331; the sequence is IQYRKAVKATLVLLPLLGITYMLFF. Residues 332 to 338 are Extracellular-facing; sequence VNPGEDE. The helical transmembrane segment at 339–368 threads the bilayer; it reads VSRVVFIYFNSFLESFQGFFVSVFYCFLNS. The Cytoplasmic portion of the chain corresponds to 369 to 415; that stretch reads EVRSAIRKRWRRWQDKHSIRARVARAMSIPTSPTRVSFHSIKQSTAV.

This sequence belongs to the G-protein coupled receptor 2 family. Interacts (via N-terminal extracellular domain) with CRH and UCN. Interacts with DLG1; this inhibits endocytosis of CRHR1 after agonist binding. Heterodimer; heterodimerizes with GPER1. C-terminal Ser or Thr residues may be phosphorylated. Post-translationally, phosphorylation at Ser-301 by PKA prevents maximal coupling to Gq-protein, and thereby negatively regulates downstream signaling. As to expression, detected in brain, especially in cerebellum. Detected in pituitary gland, and at lower levels in the olfactory bulb.

The protein resides in the cell membrane. It localises to the endosome. In terms of biological role, G-protein coupled receptor for CRH (corticotropin-releasing factor) and UCN (urocortin). Has high affinity for CRH and UCN. Ligand binding causes a conformation change that triggers signaling via guanine nucleotide-binding proteins (G proteins) and down-stream effectors, such as adenylate cyclase. Promotes the activation of adenylate cyclase, leading to increased intracellular cAMP levels. Inhibits the activity of the calcium channel CACNA1H. Required for normal embryonic development of the adrenal gland and for normal hormonal responses to stress. Plays a role in the response to anxiogenic stimuli. The protein is Corticotropin-releasing factor receptor 1 (Crhr1) of Rattus norvegicus (Rat).